The chain runs to 512 residues: GMP synthase [glutamine-hydrolyzing] (512 aa).

The region spanning 7 to 197 (LVLVVDFGGQ…LFKVAGLKAD (191 aa)) is the Glutamine amidotransferase type-1 domain. The active-site Nucleophile is C84. Catalysis depends on residues H171 and E173. The region spanning 198–387 (WSMASFAEEK…LGIPHKLVWR (190 aa)) is the GMPS ATP-PPase domain. 225 to 231 (SGGVDSS) is a binding site for ATP.

In terms of assembly, homodimer.

The catalysed reaction is XMP + L-glutamine + ATP + H2O = GMP + L-glutamate + AMP + diphosphate + 2 H(+). It participates in purine metabolism; GMP biosynthesis; GMP from XMP (L-Gln route): step 1/1. Functionally, catalyzes the synthesis of GMP from XMP. The protein is GMP synthase [glutamine-hydrolyzing] of Clostridium novyi (strain NT).